Here is a 572-residue protein sequence, read N- to C-terminus: Glutathione hydrolase 5 proenzyme (572 aa).

The Cytoplasmic segment spans residues 1–6; the sequence is MAWGHR. The helical; Signal-anchor for type II membrane protein transmembrane segment at 7-29 threads the bilayer; sequence TTVCLVLLGVSLGLAIIVLAVVL. Residues 30-572 lie on the Extracellular side of the membrane; it reads PHHQASCRPD…LRKAGKASGY (543 aa). A glycan (N-linked (GlcNAc...) asparagine) is linked at Asn-98. L-glutamate is bound at residue Arg-110. N-linked (GlcNAc...) asparagine glycans are attached at residues Asn-185, Asn-194, Asn-204, Asn-277, Asn-303, Asn-347, and Asn-377. Thr-388 functions as the Nucleophile in the catalytic mechanism. L-glutamate is bound by residues Thr-406, Glu-427, and 453–454; that span reads SS.

It belongs to the gamma-glutamyltransferase family. As to quaternary structure, heterodimer composed of the light and heavy chains. The active site is located in the light chain. Cleaved by autocatalysis into a large and a small subunit. In terms of processing, glycosylated. As to expression, widely expressed, but at low level, except in the airway epithelial cells. Detected in brain, heart, kidney, liver, lung, spleen, testis and trachea.

The protein resides in the membrane. The catalysed reaction is glutathione + H2O = L-cysteinylglycine + L-glutamate. The enzyme catalyses an S-substituted glutathione + H2O = an S-substituted L-cysteinylglycine + L-glutamate. It carries out the reaction leukotriene C4 + H2O = leukotriene D4 + L-glutamate. It catalyses the reaction S-[(2E,6E,10E)-geranylgeranyl]-L-glutathione + H2O = S-[(2E,6E,10E)-geranylgeranyl]-L-cysteinylglycine + L-glutamate. The catalysed reaction is an N-terminal (5-L-glutamyl)-[peptide] + an alpha-amino acid = 5-L-glutamyl amino acid + an N-terminal L-alpha-aminoacyl-[peptide]. It functions in the pathway lipid metabolism; leukotriene D4 biosynthesis. It participates in sulfur metabolism; glutathione metabolism. Its activity is regulated as follows. Inhibited by serine-borate. Functionally, cleaves the gamma-glutamyl bond of extracellular glutathione tripeptide (gamma-Glu-Cys-Gly) and certain glutathione conjugates. Hydrolyzes glutathione releasing L-Glu and Cys-Gly dipeptide which is further metabolized to maintain extracellular cysteine levels but also to provide cysteine necessary for intracellular glutathione synthesis. Among glutathione-S-conjugates metabolizes leukotriene C4 (LTC4) and S-geranylgeranyl-glutathione (GGG), but is inactive toward gamma-glutamyl leucine. Converts extracellular LTC4 to LTD4 during acute inflammatory response. Acts as a negative regulator of GGG bioactivity. GGT5 (via GGG catabolism) and ABCC1 (via extracellular transport) establish GGG gradients within lymphoid tissues to position P2RY8-positive lymphocytes at germinal centers in lymphoid follicles and restrict their chemotactic transmigration from blood vessels to bone marrow parenchyma. The transpeptidation reaction, i.e. the transfer of gamma-glutamyl moiety to an acceptor molecule to yield a new gamma-glutamyl compound requires high concentration of dipeptide acceptor and is considered nonphysiological. The sequence is that of Glutathione hydrolase 5 proenzyme (Ggt5) from Rattus norvegicus (Rat).